Here is a 568-residue protein sequence, read N- to C-terminus: Periplasmic pectate lyase (568 aa).

The N-terminal stretch at 1 to 19 is a signal peptide; the sequence is MKRFALSLLAGLVALQASA.

It belongs to the polysaccharide lyase 2 family.

Its subcellular location is the periplasm. The enzyme catalyses Eliminative cleavage of (1-&gt;4)-alpha-D-galacturonan to give oligosaccharides with 4-deoxy-alpha-D-galact-4-enuronosyl groups at their non-reducing ends.. Its pathway is glycan metabolism; pectin degradation; 2-dehydro-3-deoxy-D-gluconate from pectin: step 2/5. The polypeptide is Periplasmic pectate lyase (pelB) (Pectobacterium carotovorum subsp. carotovorum (Erwinia carotovora subsp. carotovora)).